Here is a 256-residue protein sequence, read N- to C-terminus: DNA repair protein RecO (256 aa).

This sequence belongs to the RecO family.

Functionally, involved in DNA repair and RecF pathway recombination. The chain is DNA repair protein RecO from Anaeromyxobacter sp. (strain Fw109-5).